Reading from the N-terminus, the 182-residue chain is uncharacterized protein (182 aa).

It is found in the plastid. Its subcellular location is the cyanelle. This is an uncharacterized protein from Cyanophora paradoxa.